Here is a 149-residue protein sequence, read N- to C-terminus: 16.9 kDa class I heat shock protein 3 (149 aa).

One can recognise a sHSP domain in the interval 35–149 (DTAAFANARV…PEVKAIEISG (115 aa)).

This sequence belongs to the small heat shock protein (HSP20) family. May form oligomeric structures.

The protein localises to the cytoplasm. This is 16.9 kDa class I heat shock protein 3 (HSP16.9C) from Oryza sativa subsp. japonica (Rice).